Here is a 288-residue protein sequence, read N- to C-terminus: Cyclin-dependent kinase 2 homolog (288 aa).

One can recognise a Protein kinase domain in the interval 4–284 (YHGLEKIGEG…AKQAIEHPYF (281 aa)). ATP contacts are provided by residues 10-18 (IGEGTYGVV) and Lys32. Position 14 is a phosphothreonine (Thr14). A Phosphotyrosine modification is found at Tyr15. Asp125 serves as the catalytic Proton acceptor. Thr158 carries the post-translational modification Phosphothreonine.

This sequence belongs to the protein kinase superfamily. CMGC Ser/Thr protein kinase family. CDC2/CDKX subfamily. As to quaternary structure, may form a complex composed of at least the catalytic subunit CRK2 and a cyclin. The cofactor is Mg(2+).

The protein localises to the cytoplasm. The catalysed reaction is L-seryl-[protein] + ATP = O-phospho-L-seryl-[protein] + ADP + H(+). It carries out the reaction L-threonyl-[protein] + ATP = O-phospho-L-threonyl-[protein] + ADP + H(+). It catalyses the reaction [DNA-directed RNA polymerase] + ATP = phospho-[DNA-directed RNA polymerase] + ADP + H(+). With respect to regulation, phosphorylation at Thr-14 or Tyr-15 inactivates the enzyme, while phosphorylation at Thr-158 activates it. Serine/threonine-protein kinase. Involved in the control of the cell cycle. Required for entry into S-phase and mitosis. Probable component of the kinase complex that phosphorylates the repetitive C-terminus of RNA polymerase II. The sequence is that of Cyclin-dependent kinase 2 homolog from Plasmodium chabaudi chabaudi.